A 158-amino-acid chain; its full sequence is NAD(P)H-quinone oxidoreductase subunit J, chloroplastic (158 aa).

Belongs to the complex I 30 kDa subunit family. In terms of assembly, NDH is composed of at least 16 different subunits, 5 of which are encoded in the nucleus.

Its subcellular location is the plastid. The protein localises to the chloroplast thylakoid membrane. It carries out the reaction a plastoquinone + NADH + (n+1) H(+)(in) = a plastoquinol + NAD(+) + n H(+)(out). The catalysed reaction is a plastoquinone + NADPH + (n+1) H(+)(in) = a plastoquinol + NADP(+) + n H(+)(out). Functionally, NDH shuttles electrons from NAD(P)H:plastoquinone, via FMN and iron-sulfur (Fe-S) centers, to quinones in the photosynthetic chain and possibly in a chloroplast respiratory chain. The immediate electron acceptor for the enzyme in this species is believed to be plastoquinone. Couples the redox reaction to proton translocation, and thus conserves the redox energy in a proton gradient. The chain is NAD(P)H-quinone oxidoreductase subunit J, chloroplastic from Aethionema grandiflorum (Persian stone-cress).